A 203-amino-acid polypeptide reads, in one-letter code: Recombination protein RecR (203 aa).

Residues 57–72 (CQRCRTLAETPLCSIC) form a C4-type zinc finger. The 96-residue stretch at 80–175 (GLLCVVESPA…RLSRLAYGVP (96 aa)) folds into the Toprim domain.

The protein belongs to the RecR family.

Functionally, may play a role in DNA repair. It seems to be involved in an RecBC-independent recombinational process of DNA repair. It may act with RecF and RecO. The protein is Recombination protein RecR of Chromohalobacter salexigens (strain ATCC BAA-138 / DSM 3043 / CIP 106854 / NCIMB 13768 / 1H11).